The sequence spans 430 residues: Adenylosuccinate synthetase (430 aa).

GTP is bound by residues 17–23 (GDEGKGK) and 45–47 (GHT). D18 (proton acceptor) is an active-site residue. 2 residues coordinate Mg(2+): D18 and G45. IMP contacts are provided by residues 18–21 (DEGK), 43–46 (NAGH), T139, R153, N229, T244, and R308. H46 functions as the Proton donor in the catalytic mechanism. 304 to 310 (TVTGRRR) is a substrate binding site. Residues R310, 336–338 (KLD), and 418–420 (GVG) contribute to the GTP site.

It belongs to the adenylosuccinate synthetase family. Homodimer. It depends on Mg(2+) as a cofactor.

The protein localises to the cytoplasm. It catalyses the reaction IMP + L-aspartate + GTP = N(6)-(1,2-dicarboxyethyl)-AMP + GDP + phosphate + 2 H(+). The protein operates within purine metabolism; AMP biosynthesis via de novo pathway; AMP from IMP: step 1/2. In terms of biological role, plays an important role in the de novo pathway and in the salvage pathway of purine nucleotide biosynthesis. Catalyzes the first committed step in the biosynthesis of AMP from IMP. In Cryptococcus neoformans var. neoformans serotype D (strain JEC21 / ATCC MYA-565) (Filobasidiella neoformans), this protein is Adenylosuccinate synthetase.